We begin with the raw amino-acid sequence, 200 residues long: Dephospho-CoA kinase (200 aa).

Residues Val4–Asp200 form the DPCK domain. Residue Ala12–Thr17 coordinates ATP.

It belongs to the CoaE family.

The protein resides in the cytoplasm. It catalyses the reaction 3'-dephospho-CoA + ATP = ADP + CoA + H(+). It functions in the pathway cofactor biosynthesis; coenzyme A biosynthesis; CoA from (R)-pantothenate: step 5/5. Catalyzes the phosphorylation of the 3'-hydroxyl group of dephosphocoenzyme A to form coenzyme A. This is Dephospho-CoA kinase from Bacillus cereus (strain ZK / E33L).